A 122-amino-acid polypeptide reads, in one-letter code: Small ribosomal subunit protein uS13 (122 aa).

The tract at residues 96-122 is disordered; it reads LPVHGQRTKTNARTRKGPARTVAGKKK.

The protein belongs to the universal ribosomal protein uS13 family. Part of the 30S ribosomal subunit. Forms a loose heterodimer with protein S19. Forms two bridges to the 50S subunit in the 70S ribosome.

Located at the top of the head of the 30S subunit, it contacts several helices of the 16S rRNA. In the 70S ribosome it contacts the 23S rRNA (bridge B1a) and protein L5 of the 50S subunit (bridge B1b), connecting the 2 subunits; these bridges are implicated in subunit movement. Contacts the tRNAs in the A and P-sites. In Geotalea daltonii (strain DSM 22248 / JCM 15807 / FRC-32) (Geobacter daltonii), this protein is Small ribosomal subunit protein uS13.